The primary structure comprises 389 residues: 26S proteasome non-ATPase regulatory subunit 6 (389 aa).

The PCI domain maps to 193 to 361 (DFKQAAELFL…EIVETNRPDS (169 aa)).

This sequence belongs to the proteasome subunit S10 family. In terms of assembly, component of the 19S proteasome regulatory particle complex. The 26S proteasome consists of a 20S core particle (CP) and two 19S regulatory subunits (RP). The regulatory particle is made of a lid composed of 9 subunits including PSMD6, a base containing 6 ATPases and few additional components.

Functionally, component of the 26S proteasome, a multiprotein complex involved in the ATP-dependent degradation of ubiquitinated proteins. This complex plays a key role in the maintenance of protein homeostasis by removing misfolded or damaged proteins, which could impair cellular functions, and by removing proteins whose functions are no longer required. Therefore, the proteasome participates in numerous cellular processes, including cell cycle progression, apoptosis, or DNA damage repair. The chain is 26S proteasome non-ATPase regulatory subunit 6 (PSMD6) from Homo sapiens (Human).